Reading from the N-terminus, the 285-residue chain is Flagellar filament core protein flaB2 (285 aa).

It belongs to the bacterial flagellin family. The flagellum consists of an outer layer composed of two sheath proteins, flaA1 (44 kDa) and flaA2 (35 kDa) around a core that contains three proteins flaB1 (37 kDa), flaB2 (34 kDa) and flaB3 (32 kDa).

The protein localises to the periplasmic flagellum. It localises to the periplasm. Functionally, component of the core of the flagella. This Brachyspira hyodysenteriae (Treponema hyodysenteriae) protein is Flagellar filament core protein flaB2 (flaB2).